The primary structure comprises 194 residues: Putative 3-methyladenine DNA glycosylase (194 aa).

The protein belongs to the DNA glycosylase MPG family.

The chain is Putative 3-methyladenine DNA glycosylase from Anaeromyxobacter sp. (strain Fw109-5).